We begin with the raw amino-acid sequence, 457 residues long: Aromatic amino acid transport protein AroP (457 aa).

The Cytoplasmic portion of the chain corresponds to Met-1–His-19. The chain crosses the membrane as a helical span at residues Ile-20 to Val-40. Residues Ile-41–Gln-42 lie on the Periplasmic side of the membrane. Residues Ser-43 to Met-63 form a helical membrane-spanning segment. Residues Arg-64 to Tyr-86 are Cytoplasmic-facing. A helical transmembrane segment spans residues Trp-87 to Ala-107. The Periplasmic portion of the chain corresponds to Met-108 to Tyr-117. A helical membrane pass occupies residues Ile-118–Ile-138. Over Asn-139–Trp-155 the chain is Cytoplasmic. Residues Phe-156–Phe-176 traverse the membrane as a helical segment. Over Ser-177–Thr-201 the chain is Periplasmic. The helical transmembrane segment at Gly-202–Ile-222 threads the bilayer. The Cytoplasmic portion of the chain corresponds to Thr-223 to Gln-240. Residues Val-241–Pro-261 form a helical membrane-spanning segment. The Periplasmic segment spans residues Trp-262–Pro-271. A helical membrane pass occupies residues Phe-272–Val-292. The Cytoplasmic segment spans residues Leu-293 to Pro-333. A helical transmembrane segment spans residues Val-334 to Ala-354. Residues Pro-355–Ala-358 are Periplasmic-facing. The chain crosses the membrane as a helical span at residues Phe-359 to Leu-379. Topologically, residues Ala-380–Trp-407 are cytoplasmic. The chain crosses the membrane as a helical span at residues Ile-408–Ile-428. Position 429 (Ser-429) is a topological domain, periplasmic. The helical transmembrane segment at Val-430 to Thr-450 threads the bilayer. The Cytoplasmic segment spans residues Ala-451–His-457.

Belongs to the amino acid-polyamine-organocation (APC) superfamily. Amino acid transporter (AAT) (TC 2.A.3.1) family.

The protein resides in the cell inner membrane. It carries out the reaction L-phenylalanine(in) + H(+)(in) = L-phenylalanine(out) + H(+)(out). The enzyme catalyses L-tryptophan(in) + H(+)(in) = L-tryptophan(out) + H(+)(out). It catalyses the reaction L-tyrosine(in) + H(+)(in) = L-tyrosine(out) + H(+)(out). Functionally, permease that is involved in the active transport across the cytoplasmic membrane of all three aromatic amino acids, phenylalanine, tyrosine and tryptophan. In Escherichia coli O157:H7, this protein is Aromatic amino acid transport protein AroP (aroP).